We begin with the raw amino-acid sequence, 224 residues long: Protein LURP-one-related 1 (224 aa).

The segment at 1 to 23 (MQQPYEYRYPQGTGPSAPPPPPK) is disordered.

Belongs to the LOR family.

Might be related to the phospholipid scramblase and tubby-like superfamily of membrane tethered transcription factors. This is Protein LURP-one-related 1 from Arabidopsis thaliana (Mouse-ear cress).